Here is a 358-residue protein sequence, read N- to C-terminus: Alanine racemase (358 aa).

The active-site Proton acceptor; specific for D-alanine is the lysine 35. Position 35 is an N6-(pyridoxal phosphate)lysine (lysine 35). Arginine 130 provides a ligand contact to substrate. Catalysis depends on tyrosine 255, which acts as the Proton acceptor; specific for L-alanine. Methionine 303 is a substrate binding site.

This sequence belongs to the alanine racemase family. It depends on pyridoxal 5'-phosphate as a cofactor.

It catalyses the reaction L-alanine = D-alanine. It participates in amino-acid biosynthesis; D-alanine biosynthesis; D-alanine from L-alanine: step 1/1. Its function is as follows. Catalyzes the interconversion of L-alanine and D-alanine. May also act on other amino acids. This is Alanine racemase (alr) from Shewanella baltica (strain OS155 / ATCC BAA-1091).